The following is a 227-amino-acid chain: CDP-diacylglycerol--inositol 3-phosphatidyltransferase 1 (227 aa).

Helical transmembrane passes span leucine 12–valine 36 and proline 42–valine 61. Residues aspartate 55 and aspartate 58 each contribute to the Mg(2+) site. Residues glycine 59, arginine 63, and serine 69 each contribute to the a CDP-1,2-diacyl-sn-glycerol site. A run of 4 helical transmembrane segments spans residues alanine 73–tyrosine 95, phenylalanine 101–alanine 122, tyrosine 142–isoleucine 165, and valine 177–methionine 200. Residues aspartate 76 and aspartate 80 each contribute to the Mg(2+) site. Aspartate 80 (proton acceptor) is an active-site residue.

This sequence belongs to the CDP-alcohol phosphatidyltransferase class-I family. Mg(2+) is required as a cofactor. Mn(2+) serves as cofactor. Expressed in stems, flowers, shoots and roots. Present in epidermal tissues.

It localises to the membrane. The enzyme catalyses a CDP-1,2-diacyl-sn-glycerol + myo-inositol = a 1,2-diacyl-sn-glycero-3-phospho-(1D-myo-inositol) + CMP + H(+). Catalyzes the biosynthesis of phosphatidylinositol (PtdIns) as well as PtdIns:inositol exchange reaction. May thus act to reduce an excessive cellular PtdIns content. The exchange activity is due to the reverse reaction of PtdIns synthase and is dependent on CMP, which is tightly bound to the enzyme. In Arabidopsis thaliana (Mouse-ear cress), this protein is CDP-diacylglycerol--inositol 3-phosphatidyltransferase 1 (PIS1).